A 118-amino-acid polypeptide reads, in one-letter code: Large ribosomal subunit protein uL24 (118 aa).

Belongs to the universal ribosomal protein uL24 family. In terms of assembly, part of the 50S ribosomal subunit.

Its function is as follows. One of two assembly initiator proteins, it binds directly to the 5'-end of the 23S rRNA, where it nucleates assembly of the 50S subunit. One of the proteins that surrounds the polypeptide exit tunnel on the outside of the subunit. The sequence is that of Large ribosomal subunit protein uL24 from Parasynechococcus marenigrum (strain WH8102).